A 224-amino-acid polypeptide reads, in one-letter code: Response regulator protein GraR (224 aa).

In terms of domain architecture, Response regulatory spans 2-115; the sequence is QILLVEDDNT…VLIAKLQAIY (114 aa). At Asp51 the chain carries 4-aspartylphosphate. Residues 126–224 constitute a DNA-binding region (ompR/PhoB-type); it reads KRTLSWQDAT…KVGKGYLAHE (99 aa).

In terms of processing, phosphorylated by GraS.

Its subcellular location is the cytoplasm. Member of the two-component regulatory system GraR/GraS involved in resistance against cationic antimicrobial peptides (CAMPs). The protein is Response regulator protein GraR (graR) of Staphylococcus epidermidis (strain ATCC 35984 / DSM 28319 / BCRC 17069 / CCUG 31568 / BM 3577 / RP62A).